Here is a 336-residue protein sequence, read N- to C-terminus: Inactive serine/threonine-protein kinase BKN2 (336 aa).

The interval 1-25 is disordered; the sequence is MGNCLKPLKEQPPSASPKPLTIPSS. Residue G2 is the site of N-myristoyl glycine attachment. Residue C4 is the site of S-palmitoyl cysteine attachment. The Protein kinase domain maps to 52 to 332; that stretch reads YMVIKGNDNG…QVFDGLNDIA (281 aa).

Belongs to the protein kinase superfamily. Ser/Thr protein kinase family. In terms of assembly, component of an immune signaling complex made of, at least, SZE1, BKN2/SZE2, ZAR1 and ZED1. Interacts directly with ZAR1 and Pseudomonas syringae HOPZ1A at the plasma membrane. In terms of processing, N-terminal myristoylation is critical for plasma membrane localization and implication in defense responses. In terms of tissue distribution, expressed in stigma and ovaries in flowers, and in stems and seedlings.

The protein localises to the cell membrane. Functionally, together with SZE1 and ZED1, required for effector-triggered immunity (e.g. Pseudomonas syringae type III effector HopZ1a) via the activation of ZAR1, thus being essential for resistance against P. syringae pv. tomato DC3000 expressing HopZ1a. Collaboratively with BKN1, involved in compatible pollen-stigma interactions. This Arabidopsis thaliana (Mouse-ear cress) protein is Inactive serine/threonine-protein kinase BKN2.